Consider the following 315-residue polypeptide: Replication-associated protein VP4 (315 aa).

Catalysis depends on O-(5'-phospho-DNA)-tyrosine intermediate residues tyrosine 176 and tyrosine 180. Residues 253 to 315 (EYDAKVKLKS…FKQLQEKLKL (63 aa)) are a coiled coil.

It belongs to the microviridae Rep protein family.

The enzyme catalyses ATP + (deoxyribonucleotide)n-3'-hydroxyl + 5'-phospho-(deoxyribonucleotide)m = (deoxyribonucleotide)n+m + AMP + diphosphate.. Functionally, plays an essential role in viral DNA replication. Binds the origin of replication and cleaves the dsDNA replicative form I (RFI) and becomes covalently bound to it via phosphotyrosine bond, generating the dsDNA replicative form II (RFII). In turn, viral DNA replication initiates at the 3'-OH of the cleavage site. After one round of rolling circle synthesis, protein VP4 is linked to the newly synthesized ssDNA and joins the ends of the displaced strand to generate a circular single-stranded molecule ready to be packed into a virion. This chain is Replication-associated protein VP4, found in Bdellovibrio bacteriovorus (Bacteriophage phiMH2K).